Consider the following 193-residue polypeptide: Interleukin-18 (193 aa).

The propeptide occupies 1–36 (MAAEQVEDNCISFVEMKFINNTLYFVAENDEDLESD).

It belongs to the IL-1 family. In terms of assembly, forms a ternary complex with ligand-binding receptor subunit IL18R1 and signaling receptor subunit IL18RAP at the plasma membrane. Mature IL18 first binds to IL18R1 forming a low affinity binary complex, which then interacts with IL18RAP to form a high affinity ternary complex that signals inside the cell. Interacts with cargo receptor TMED10; the interaction mediates the translocation from the cytoplasm into the ERGIC (endoplasmic reticulum-Golgi intermediate compartment) and thereby secretion. The pro-IL-18 precursor is processed by CASP1, CASP4 or CASP5 to yield its mature, active form. The pro-IL-18 precursor features autoinhibitory interactions between the propeptide and the post-cleavage-site region, preventing recognition by the IL18R1 receptor. Processing by CASP1, CASP4 or CASP5 induces conformational changes to generate critical receptor-binding sites. The mature form is then secreted and released in the extracellular milieu by passing through the gasdermin-D (GSDMD) pore. In contrast, cleavage by CASP3 inactivates IL18.

It is found in the cytoplasm. The protein localises to the cytosol. It localises to the secreted. Its function is as follows. Pro-inflammatory cytokine primarily involved in epithelial barrier repair, polarized T-helper 1 (Th1) cell and natural killer (NK) cell immune responses. Upon binding to IL18R1 and IL18RAP, forms a signaling ternary complex which activates NF-kappa-B, triggering synthesis of inflammatory mediators. Synergizes with IL12/interleukin-12 to induce IFNG synthesis from T-helper 1 (Th1) cells and natural killer (NK) cells. Involved in transduction of inflammation downstream of pyroptosis: its mature form is specifically released in the extracellular milieu by passing through the gasdermin-D (GSDMD) pore. This chain is Interleukin-18 (IL18), found in Boselaphus tragocamelus (Nilgai).